The chain runs to 338 residues: Methionine aminopeptidase 1D, mitochondrial (338 aa).

The transit peptide at Met-1–Arg-47 directs the protein to the mitochondrion. Substrate is bound at residue His-164. Residues Asp-181, Asp-192, and His-255 each contribute to the a divalent metal cation site. Residue His-262 participates in substrate binding. Residues Glu-287 and Glu-318 each contribute to the a divalent metal cation site.

This sequence belongs to the peptidase M24A family. Methionine aminopeptidase type 1 subfamily. Requires Co(2+) as cofactor. Zn(2+) is required as a cofactor. The cofactor is Mn(2+). Fe(2+) serves as cofactor.

Its subcellular location is the mitochondrion. It catalyses the reaction Release of N-terminal amino acids, preferentially methionine, from peptides and arylamides.. Its function is as follows. Removes the N-terminal methionine from nascent proteins. The N-terminal methionine is often cleaved when the second residue in the primary sequence is small and uncharged (Met-Ala-, Cys, Gly, Pro, Ser, Thr, or Val). Requires deformylation of the N(alpha)-formylated initiator methionine before it can be hydrolyzed. The chain is Methionine aminopeptidase 1D, mitochondrial (metap1d) from Danio rerio (Zebrafish).